The following is a 372-amino-acid chain: Carbamoyl phosphate synthase small chain (372 aa).

Residues 1-184 are CPSase; that stretch reads MKAYIYLEND…SFQKFNDAKR (184 aa). L-glutamine-binding residues include Ser45, Gly240, and Gly242. The region spanning 188–372 is the Glutamine amidotransferase type-1 domain; sequence KVAVIDYGVK…YIFKEFMNLM (185 aa). Cys268 serves as the catalytic Nucleophile. Positions 269, 272, 310, and 313 each coordinate L-glutamine. Catalysis depends on residues His351 and Glu353.

Belongs to the CarA family. In terms of assembly, composed of two chains; the small (or glutamine) chain promotes the hydrolysis of glutamine to ammonia, which is used by the large (or ammonia) chain to synthesize carbamoyl phosphate. Tetramer of heterodimers (alpha,beta)4.

The catalysed reaction is hydrogencarbonate + L-glutamine + 2 ATP + H2O = carbamoyl phosphate + L-glutamate + 2 ADP + phosphate + 2 H(+). It carries out the reaction L-glutamine + H2O = L-glutamate + NH4(+). Its pathway is amino-acid biosynthesis; L-arginine biosynthesis; carbamoyl phosphate from bicarbonate: step 1/1. It functions in the pathway pyrimidine metabolism; UMP biosynthesis via de novo pathway; (S)-dihydroorotate from bicarbonate: step 1/3. Small subunit of the glutamine-dependent carbamoyl phosphate synthetase (CPSase). CPSase catalyzes the formation of carbamoyl phosphate from the ammonia moiety of glutamine, carbonate, and phosphate donated by ATP, constituting the first step of 2 biosynthetic pathways, one leading to arginine and/or urea and the other to pyrimidine nucleotides. The small subunit (glutamine amidotransferase) binds and cleaves glutamine to supply the large subunit with the substrate ammonia. The protein is Carbamoyl phosphate synthase small chain of Campylobacter jejuni subsp. jejuni serotype O:2 (strain ATCC 700819 / NCTC 11168).